The following is a 123-amino-acid chain: Large ribosomal subunit protein bL12 (123 aa).

Belongs to the bacterial ribosomal protein bL12 family. Homodimer. Part of the ribosomal stalk of the 50S ribosomal subunit. Forms a multimeric L10(L12)X complex, where L10 forms an elongated spine to which 2 to 4 L12 dimers bind in a sequential fashion. Binds GTP-bound translation factors.

Forms part of the ribosomal stalk which helps the ribosome interact with GTP-bound translation factors. Is thus essential for accurate translation. In Geobacillus kaustophilus (strain HTA426), this protein is Large ribosomal subunit protein bL12.